A 182-amino-acid chain; its full sequence is MKNNQRPVIRSTTVIGVIRDGKAALGSDGQMTLGNTVIKHSTRKIRRLYHGKLVAGFAGATADAVTLLDRFEEKLEAYNGKLDRAAVELARDWRTDKYLRRLEAMLAIVSHDKALIISGTGDVIEPEDGIVAIGSGSMYALAAARSLMKHSSLPAKEIVLESLKIAADICIYTNDHIIVEEV.

Residue Thr12 is part of the active site. Residues Ala167, Cys170, and Thr173 each contribute to the Na(+) site.

It belongs to the peptidase T1B family. HslV subfamily. As to quaternary structure, a double ring-shaped homohexamer of HslV is capped on each side by a ring-shaped HslU homohexamer. The assembly of the HslU/HslV complex is dependent on binding of ATP.

The protein resides in the cytoplasm. It catalyses the reaction ATP-dependent cleavage of peptide bonds with broad specificity.. Allosterically activated by HslU binding. Functionally, protease subunit of a proteasome-like degradation complex believed to be a general protein degrading machinery. The chain is ATP-dependent protease subunit HslV from Pelodictyon phaeoclathratiforme (strain DSM 5477 / BU-1).